Consider the following 314-residue polypeptide: Hydroxyethylthiazole kinase (314 aa).

Positions 1–13 (MSNSASSFADVSS) are enriched in low complexity. The segment at 1–24 (MSNSASSFADVSSGCTAGTPVPAD) is disordered. Residue methionine 70 participates in substrate binding. The ATP site is built by arginine 145 and serine 217. Position 244 (glycine 244) interacts with substrate.

Belongs to the Thz kinase family. The cofactor is Mg(2+).

The catalysed reaction is 5-(2-hydroxyethyl)-4-methylthiazole + ATP = 4-methyl-5-(2-phosphooxyethyl)-thiazole + ADP + H(+). The protein operates within cofactor biosynthesis; thiamine diphosphate biosynthesis; 4-methyl-5-(2-phosphoethyl)-thiazole from 5-(2-hydroxyethyl)-4-methylthiazole: step 1/1. In terms of biological role, catalyzes the phosphorylation of the hydroxyl group of 4-methyl-5-beta-hydroxyethylthiazole (THZ). The protein is Hydroxyethylthiazole kinase of Bifidobacterium longum subsp. infantis (strain ATCC 15697 / DSM 20088 / JCM 1222 / NCTC 11817 / S12).